Consider the following 111-residue polypeptide: Cell cycle protein GpsB (111 aa).

Residues 38 to 72 (IKDYEAFHKEFDQLKQQNARLKRELEEQKVAATQV) adopt a coiled-coil conformation.

Belongs to the GpsB family. In terms of assembly, forms polymers through the coiled coil domains. Interacts with PBP1, MreC and EzrA.

The protein localises to the cytoplasm. Functionally, divisome component that associates with the complex late in its assembly, after the Z-ring is formed, and is dependent on DivIC and PBP2B for its recruitment to the divisome. Together with EzrA, is a key component of the system that regulates PBP1 localization during cell cycle progression. Its main role could be the removal of PBP1 from the cell pole after pole maturation is completed. Also contributes to the recruitment of PBP1 to the division complex. Not essential for septum formation. This is Cell cycle protein GpsB from Bacillus mycoides (strain KBAB4) (Bacillus weihenstephanensis).